A 1392-amino-acid polypeptide reads, in one-letter code: DNA-directed RNA polymerase subunit beta (1392 aa).

The protein belongs to the RNA polymerase beta chain family. The RNAP catalytic core consists of 2 alpha, 1 beta, 1 beta' and 1 omega subunit. When a sigma factor is associated with the core the holoenzyme is formed, which can initiate transcription.

It catalyses the reaction RNA(n) + a ribonucleoside 5'-triphosphate = RNA(n+1) + diphosphate. Its function is as follows. DNA-dependent RNA polymerase catalyzes the transcription of DNA into RNA using the four ribonucleoside triphosphates as substrates. This Neisseria gonorrhoeae (strain ATCC 700825 / FA 1090) protein is DNA-directed RNA polymerase subunit beta.